The chain runs to 417 residues: NADH-quinone oxidoreductase subunit D (417 aa).

It belongs to the complex I 49 kDa subunit family. In terms of assembly, NDH-1 is composed of 14 different subunits. Subunits NuoB, C, D, E, F, and G constitute the peripheral sector of the complex.

Its subcellular location is the cell inner membrane. The catalysed reaction is a quinone + NADH + 5 H(+)(in) = a quinol + NAD(+) + 4 H(+)(out). Its function is as follows. NDH-1 shuttles electrons from NADH, via FMN and iron-sulfur (Fe-S) centers, to quinones in the respiratory chain. The immediate electron acceptor for the enzyme in this species is believed to be ubiquinone. Couples the redox reaction to proton translocation (for every two electrons transferred, four hydrogen ions are translocated across the cytoplasmic membrane), and thus conserves the redox energy in a proton gradient. The polypeptide is NADH-quinone oxidoreductase subunit D (Cupriavidus taiwanensis (strain DSM 17343 / BCRC 17206 / CCUG 44338 / CIP 107171 / LMG 19424 / R1) (Ralstonia taiwanensis (strain LMG 19424))).